The chain runs to 826 residues: MWALCSLLRSAAGRTMSQGRTISQAPARRERPRKDPLRHLRTREKRGPSGCSGGPNTVYLQVVAAGSRDSGAALYVFSEFNRYLFNCGEGVQRLMQEHKLKVARLDNIFLTRMHWSNVGGLSGMILTLKETGLPKCVLSGPPQLEKYLEAIKIFSGPLKGIELAVRPHSAPEYEDETMTVYQIPIHSEQRRGKHQPWQSPERPLSRLSPERSSDSESNENEPHLPHGVSQRRGVRDSSLVVAFICKLHLKRGNFLVLKAKEMGLPVGTAAIAPIIAAVKDGKSITHEGREILAEELCTPPDPGAAFVVVECPDESFIQPICENATFQRYQGKADAPVALVVHMAPASVLVDSRYQQWMERFGPDTQHLVLNENCASVHNLRSHKIQTQLNLIHPDIFPLLTSFRCKKEGPTLSVPMVQGECLLKYQLRPRREWQRDAIITCNPEEFIVEALQLPNFQQSVQEYRRSAQDGPAPAEKRSQYPEIIFLGTGSAIPMKIRNVSATLVNISPDTSLLLDCGEGTFGQLCRHYGDQVDRVLGTLAAVFVSHLHADHHTGLPSILLQRERALASLGKPLHPLLVVAPNQLKAWLQQYHNQCQEVLHHISMIPAKCLQEGAEISSPAVERLISSLLRTCDLEEFQTCLVRHCKHAFGCALVHTSGWKVVYSGDTMPCEALVRMGKDATLLIHEATLEDGLEEEAVEKTHSTTSQAISVGMRMNAEFIMLNHFSQRYAKVPLFSPNFSEKVGVAFDHMKVCFGDFPTMPKLIPPLKALFAGDIEEMEERREKRELRQVRAALLSRELAGGLEDGEPQQKRAHTEEPQAKKVRAQ.

Residues 1–16 (MWALCSLLRSAAGRTM) constitute a mitochondrion transit peptide. Disordered regions lie at residues 16–51 (MSQGRTISQAPARRERPRKDPLRHLRTREKRGPSGC) and 188–231 (EQRR…VSQR). Residues 27-38 (ARRERPRKDPLR) show a composition bias toward basic and acidic residues. Residues Ser-199, Ser-208, Ser-212, Ser-229, Ser-618, and Ser-736 each carry the phosphoserine modification. Residues 208–224 (SPERSSDSESNENEPHL) are compositionally biased toward basic and acidic residues. The disordered stretch occupies residues 798-826 (ELAGGLEDGEPQQKRAHTEEPQAKKVRAQ). Basic and acidic residues predominate over residues 808-820 (PQQKRAHTEEPQA).

This sequence belongs to the RNase Z family. In terms of assembly, homodimer. Interacts with PTCD1. Requires Zn(2+) as cofactor. In terms of tissue distribution, widely expressed. Highly expressed in heart, placenta, liver, skeletal muscle, kidney, pancreas, testis and ovary. Weakly expressed in brain, lung, spleen, thymus, prostate, small intestine, colon and leukocytes.

The protein localises to the mitochondrion. Its subcellular location is the mitochondrion matrix. The protein resides in the mitochondrion nucleoid. It localises to the nucleus. The catalysed reaction is Endonucleolytic cleavage of RNA, removing extra 3' nucleotides from tRNA precursor, generating 3' termini of tRNAs. A 3'-hydroxy group is left at the tRNA terminus and a 5'-phosphoryl group is left at the trailer molecule.. Functionally, zinc phosphodiesterase, which displays mitochondrial tRNA 3'-processing endonuclease activity. Involved in tRNA maturation, by removing a 3'-trailer from precursor tRNA. Associates with mitochondrial DNA complexes at the nucleoids to initiate RNA processing and ribosome assembly. This Homo sapiens (Human) protein is Zinc phosphodiesterase ELAC protein 2 (ELAC2).